A 1150-amino-acid polypeptide reads, in one-letter code: Serine/threonine-protein phosphatase 2A regulatory subunit B'' subunit alpha (1150 aa).

The segment at 661 to 693 is disordered; sequence PEVIKIQNKPEKKPGTPLPPPATSPSSPRPLSP. Positions 676 to 693 are enriched in pro residues; it reads TPLPPPATSPSSPRPLSP. 2 EF-hand domains span residues 758-793 and 972-1007; these read CPLY…LLNN and RNPT…QCER. Ca(2+)-binding residues include aspartate 985, aspartate 987, aspartate 989, and glutamate 996. The interval 1105-1132 is disordered; sequence AQFQEGFEDYETDEPASPSEFGNKSNKI.

In terms of assembly, PP2A consists of a common heterodimeric core enzyme, composed of a 36 kDa catalytic subunit (subunit C) and a 65 kDa constant regulatory subunit (PR65 or subunit A), that associates with a variety of regulatory subunits. Proteins that associate with the core dimer include three families of regulatory subunits B (the R2/B/PR55/B55, R3/B''/PR72/PR130/PR59 and R5/B'/B56 families), the 48 kDa variable regulatory subunit, viral proteins, and cell signaling molecules. In terms of tissue distribution, expressed in heart, brain, placenta, lung, muscle and kidney.

Functionally, the B regulatory subunit might modulate substrate selectivity and catalytic activity, and might also direct the localization of the catalytic enzyme to a particular subcellular compartment. The protein is Serine/threonine-protein phosphatase 2A regulatory subunit B'' subunit alpha (PPP2R3A) of Homo sapiens (Human).